The sequence spans 124 residues: Large ribosomal subunit protein bL12 (124 aa).

This sequence belongs to the bacterial ribosomal protein bL12 family. In terms of assembly, homodimer. Part of the ribosomal stalk of the 50S ribosomal subunit. Forms a multimeric L10(L12)X complex, where L10 forms an elongated spine to which 2 to 4 L12 dimers bind in a sequential fashion. Binds GTP-bound translation factors.

Functionally, forms part of the ribosomal stalk which helps the ribosome interact with GTP-bound translation factors. Is thus essential for accurate translation. The sequence is that of Large ribosomal subunit protein bL12 from Allorhizobium ampelinum (strain ATCC BAA-846 / DSM 112012 / S4) (Agrobacterium vitis (strain S4)).